The following is a 285-amino-acid chain: Phosphatidylserine decarboxylase proenzyme (285 aa).

Catalysis depends on charge relay system; for autoendoproteolytic cleavage activity residues Asp-89, His-146, and Ser-252. Ser-252 (schiff-base intermediate with substrate; via pyruvic acid; for decarboxylase activity) is an active-site residue. Pyruvic acid (Ser); by autocatalysis is present on Ser-252.

This sequence belongs to the phosphatidylserine decarboxylase family. PSD-B subfamily. Prokaryotic type I sub-subfamily. As to quaternary structure, heterodimer of a large membrane-associated beta subunit and a small pyruvoyl-containing alpha subunit. Requires pyruvate as cofactor. Is synthesized initially as an inactive proenzyme. Formation of the active enzyme involves a self-maturation process in which the active site pyruvoyl group is generated from an internal serine residue via an autocatalytic post-translational modification. Two non-identical subunits are generated from the proenzyme in this reaction, and the pyruvate is formed at the N-terminus of the alpha chain, which is derived from the carboxyl end of the proenzyme. The autoendoproteolytic cleavage occurs by a canonical serine protease mechanism, in which the side chain hydroxyl group of the serine supplies its oxygen atom to form the C-terminus of the beta chain, while the remainder of the serine residue undergoes an oxidative deamination to produce ammonia and the pyruvoyl prosthetic group on the alpha chain. During this reaction, the Ser that is part of the protease active site of the proenzyme becomes the pyruvoyl prosthetic group, which constitutes an essential element of the active site of the mature decarboxylase.

It is found in the cell membrane. The catalysed reaction is a 1,2-diacyl-sn-glycero-3-phospho-L-serine + H(+) = a 1,2-diacyl-sn-glycero-3-phosphoethanolamine + CO2. It functions in the pathway phospholipid metabolism; phosphatidylethanolamine biosynthesis; phosphatidylethanolamine from CDP-diacylglycerol: step 2/2. Its function is as follows. Catalyzes the formation of phosphatidylethanolamine (PtdEtn) from phosphatidylserine (PtdSer). The protein is Phosphatidylserine decarboxylase proenzyme of Vibrio campbellii (strain ATCC BAA-1116).